The sequence spans 742 residues: RING finger protein 145 homolog (742 aa).

11 helical membrane passes run 109–129, 138–158, 178–198, 233–253, 285–305, 318–338, 368–388, 395–415, 438–458, 463–483, and 533–553; these read AAIILSYFVIFISLMFLTLPL, HFLSVFLFGVAYKLSAIYVDL, HGFHFLAQMLLVVLQSMLLEV, ACTGTMIFIATYMLYRAPSLI, ILELLTFTWITMFLMVLYVEL, ILLTGVAETTNTPITLAALAV, SGYTEAVSVVILCIQTGFLGM, ILLALVLYIVISALLQSLFEI, ICIALLLVVIPFFTTKTMLAL, IYTAIIIANSATVTARAIGVI, and VKVGFSFATFAILLFHVIVNI. Residues 592 to 630 form an RING-type; atypical zinc finger; that stretch reads CAICFIEMKEEARITPCKHYFHGPCLRKWLAVKMVCPLC. 2 disordered regions span residues 642 to 684 and 722 to 742; these read KSSS…PGDM and AYESDSDAGSEELVIEEENNN. Residues 659-672 are compositionally biased toward acidic residues; sequence AAVEENPENPEEQP.

The protein resides in the membrane. Its subcellular location is the golgi apparatus. The protein localises to the cis-Golgi network. It is found in the trans-Golgi network. It catalyses the reaction S-ubiquitinyl-[E2 ubiquitin-conjugating enzyme]-L-cysteine + [acceptor protein]-L-lysine = [E2 ubiquitin-conjugating enzyme]-L-cysteine + N(6)-ubiquitinyl-[acceptor protein]-L-lysine.. In terms of biological role, E3 ubiquitin ligase that catalyzes the direct transfer of ubiquitin from E2 ubiquitin-conjugating enzyme to a specific substrate. Acting downstream of probable Golgi transport protein eas-1, involved in inhibition of activation of transcription factor sbp-1, thereby playing a role in regulating AMsh glial cell size. The polypeptide is RING finger protein 145 homolog (Caenorhabditis elegans).